The sequence spans 444 residues: Vacuolar protein sorting-associated protein 4B (444 aa).

Residues 4–82 form the MIT domain; it reads TNTNLQKAID…KEYLKKKEKK (79 aa). Residues 19–82 adopt a coiled-coil conformation; sequence AQEDKAGNYE…KEYLKKKEKK (64 aa). Positions 77–118 are disordered; that stretch reads KKKEKKPQKPVKEEQSGPVDEKGNDSDGEAESDDPEKKKLQN. A compositionally biased stretch (basic and acidic residues) spans 86–101; that stretch reads PVKEEQSGPVDEKGND. Residues Ser-102 and Ser-108 each carry the phosphoserine modification. 174 to 181 contacts ATP; sequence GPPGTGKS. A Phosphoserine modification is found at Ser-410.

The protein belongs to the AAA ATPase family. As to quaternary structure, proposed to be monomeric or homodimeric in nucleotide-free form and to oligomerize upon binding to ATP to form two stacked hexameric or heptameric rings with a central pore through which ESCRT-III substrates are translocated in an ATP-dependent manner. In vitro, associates on the inside of a helical tubular structure formed by a CHMP2A-CHMP3 polymer. Interacts with CHMP1A, CHMP1B, CHMP4B and CHMP6. Interacts with CHMP2A. Interacts with VPS4A; the interaction suggests a heteromeric assembly with VPS4A. Interacts with VTA1. As to expression, high level expression seen in the kidney. It is also expressed in the heart, brain, spleen, lung, liver, skeletal muscle, and testis.

It is found in the late endosome membrane. It carries out the reaction ATP + H2O = ADP + phosphate + H(+). Functionally, involved in late steps of the endosomal multivesicular bodies (MVB) pathway. Recognizes membrane-associated ESCRT-III assemblies and catalyzes their disassembly, possibly in combination with membrane fission. Redistributes the ESCRT-III components to the cytoplasm for further rounds of MVB sorting. MVBs contain intraluminal vesicles (ILVs) that are generated by invagination and scission from the limiting membrane of the endosome and mostly are delivered to lysosomes enabling degradation of membrane proteins, such as stimulated growth factor receptors, lysosomal enzymes and lipids. VPS4A/B are required for the exosomal release of SDCBP, CD63 and syndecan. (Microbial infection) In conjunction with the ESCRT machinery also appears to function in topologically equivalent membrane fission events, such as the terminal stages of cytokinesis and enveloped virus budding (lentiviruses). This Mus musculus (Mouse) protein is Vacuolar protein sorting-associated protein 4B.